Reading from the N-terminus, the 390-residue chain is Zinc transporter 7 (390 aa).

The Cytoplasmic segment spans residues Met-1–Asn-37. A helical membrane pass occupies residues Leu-38–Trp-58. Residues Ser-59–Asp-67 lie on the Lumenal side of the membrane. The helical transmembrane segment at Ser-68–Ser-88 threads the bilayer. Residues Arg-89 to Arg-102 are Cytoplasmic-facing. Residues Ala-103–Phe-123 traverse the membrane as a helical segment. The Lumenal segment spans residues Ser-124–Arg-140. A helical transmembrane segment spans residues Leu-141–His-161. The his-rich loop stretch occupies residues His-161–His-226. Residues Gly-162–Gly-250 are Cytoplasmic-facing. Residues His-167–Ser-243 form a disordered region. Over residues His-177–His-186 the composition is skewed to low complexity. Positions Gly-187–His-208 are enriched in basic residues. Basic and acidic residues-rich tracts occupy residues Ser-209 to His-222 and Cys-232 to Gly-242. A helical transmembrane segment spans residues Val-251–Leu-271. At Met-272 to Gly-276 the chain is on the lumenal side. Residues Leu-277 to Ile-297 traverse the membrane as a helical segment. The Cytoplasmic portion of the chain corresponds to Pro-298–Met-390.

The protein belongs to the cation diffusion facilitator (CDF) transporter (TC 2.A.4) family. SLC30A subfamily. As to quaternary structure, homooligomer.

Its subcellular location is the golgi apparatus membrane. It localises to the cytoplasmic vesicle. The protein localises to the golgi apparatus. The protein resides in the trans-Golgi network. It is found in the sarcoplasmic reticulum. Its subcellular location is the mitochondrion. It carries out the reaction Zn(2+)(in) = Zn(2+)(out). Zinc ion transporter mediating zinc entry from the cytosol into the lumen of organelles along the secretory pathway. By contributing to zinc ion homeostasis within the early secretory pathway, regulates the activation and folding of enzymes like alkaline phosphatases. The polypeptide is Zinc transporter 7 (slc30a7) (Xenopus tropicalis (Western clawed frog)).